A 426-amino-acid chain; its full sequence is Histidine--tRNA ligase (426 aa).

It belongs to the class-II aminoacyl-tRNA synthetase family. In terms of assembly, homodimer.

Its subcellular location is the cytoplasm. It catalyses the reaction tRNA(His) + L-histidine + ATP = L-histidyl-tRNA(His) + AMP + diphosphate + H(+). This is Histidine--tRNA ligase from Legionella pneumophila (strain Lens).